The following is a 159-amino-acid chain: Fimbrial protein EcpB (159 aa).

Positions 1–6 (MYKQKG) are cleaved as a propeptide — leader sequence. The residue at position 7 (Phe7) is an N-methylphenylalanine. A helical transmembrane segment spans residues 7-29 (FTLIELMIVIAIIGILAAIALPL). Cys137 and Cys156 are oxidised to a cystine.

This sequence belongs to the N-Me-Phe pilin family.

The protein resides in the fimbrium. Its subcellular location is the membrane. This Eikenella corrodens protein is Fimbrial protein EcpB (ecpB).